Here is a 445-residue protein sequence, read N- to C-terminus: Ribosomal protein uS12 methylthiotransferase RimO (445 aa).

The region spanning isoleucine 4–lysine 119 is the MTTase N-terminal domain. [4Fe-4S] cluster contacts are provided by cysteine 13, cysteine 48, cysteine 82, cysteine 156, cysteine 160, and cysteine 163. One can recognise a Radical SAM core domain in the interval threonine 142–aspartate 372. In terms of domain architecture, TRAM spans lysine 375–asparagine 441.

This sequence belongs to the methylthiotransferase family. RimO subfamily. It depends on [4Fe-4S] cluster as a cofactor.

It is found in the cytoplasm. It carries out the reaction L-aspartate(89)-[ribosomal protein uS12]-hydrogen + (sulfur carrier)-SH + AH2 + 2 S-adenosyl-L-methionine = 3-methylsulfanyl-L-aspartate(89)-[ribosomal protein uS12]-hydrogen + (sulfur carrier)-H + 5'-deoxyadenosine + L-methionine + A + S-adenosyl-L-homocysteine + 2 H(+). Catalyzes the methylthiolation of an aspartic acid residue of ribosomal protein uS12. This chain is Ribosomal protein uS12 methylthiotransferase RimO, found in Clostridium botulinum (strain Loch Maree / Type A3).